Reading from the N-terminus, the 239-residue chain is Fatty acid metabolism regulator protein (239 aa).

An HTH gntR-type domain is found at Gln-6–Phe-74. A DNA-binding region (H-T-H motif) is located at residues Glu-34–Gln-53.

In terms of assembly, homodimer.

It is found in the cytoplasm. Multifunctional regulator of fatty acid metabolism. This is Fatty acid metabolism regulator protein from Salmonella paratyphi C (strain RKS4594).